A 94-amino-acid polypeptide reads, in one-letter code: Small ribosomal subunit protein bS6 (94 aa).

The protein belongs to the bacterial ribosomal protein bS6 family.

Binds together with bS18 to 16S ribosomal RNA. The sequence is that of Small ribosomal subunit protein bS6 from Clostridium botulinum (strain Hall / ATCC 3502 / NCTC 13319 / Type A).